Consider the following 106-residue polypeptide: Phosphoribosyl-ATP pyrophosphatase 1 (106 aa).

Belongs to the PRA-PH family.

It localises to the cytoplasm. The enzyme catalyses 1-(5-phospho-beta-D-ribosyl)-ATP + H2O = 1-(5-phospho-beta-D-ribosyl)-5'-AMP + diphosphate + H(+). Its pathway is amino-acid biosynthesis; L-histidine biosynthesis; L-histidine from 5-phospho-alpha-D-ribose 1-diphosphate: step 2/9. The protein is Phosphoribosyl-ATP pyrophosphatase 1 (hisE1) of Bradyrhizobium diazoefficiens (strain JCM 10833 / BCRC 13528 / IAM 13628 / NBRC 14792 / USDA 110).